Reading from the N-terminus, the 197-residue chain is Ribosomal RNA large subunit methyltransferase E (197 aa).

Residues glycine 50, tryptophan 52, aspartate 70, aspartate 88, and aspartate 111 each coordinate S-adenosyl-L-methionine. Lysine 151 acts as the Proton acceptor in catalysis.

This sequence belongs to the class I-like SAM-binding methyltransferase superfamily. RNA methyltransferase RlmE family.

It is found in the cytoplasm. It catalyses the reaction uridine(2552) in 23S rRNA + S-adenosyl-L-methionine = 2'-O-methyluridine(2552) in 23S rRNA + S-adenosyl-L-homocysteine + H(+). Specifically methylates the uridine in position 2552 of 23S rRNA at the 2'-O position of the ribose in the fully assembled 50S ribosomal subunit. The protein is Ribosomal RNA large subunit methyltransferase E of Syntrophobacter fumaroxidans (strain DSM 10017 / MPOB).